Reading from the N-terminus, the 127-residue chain is Holo-[acyl-carrier-protein] synthase (127 aa).

The Mg(2+) site is built by Asp-9 and Glu-58.

This sequence belongs to the P-Pant transferase superfamily. AcpS family. Mg(2+) is required as a cofactor.

The protein localises to the cytoplasm. The catalysed reaction is apo-[ACP] + CoA = holo-[ACP] + adenosine 3',5'-bisphosphate + H(+). Functionally, transfers the 4'-phosphopantetheine moiety from coenzyme A to a Ser of acyl-carrier-protein. The sequence is that of Holo-[acyl-carrier-protein] synthase from Shewanella putrefaciens (strain CN-32 / ATCC BAA-453).